The primary structure comprises 622 residues: Sodium/potassium/calcium exchanger 4 (622 aa).

Residues 1-38 (MALRGLIRQSKVRRRREMLPQQVGFVCAVLALVCCASG) form the signal peptide. Residues 39 to 97 (LFGSLGHKTASAGKHVLLDTWRNRKLMAPINGTPLAKNCTDPAIHEFPTDLFSNKERQH) lie on the Extracellular side of the membrane. Residue asparagine 76 is glycosylated (N-linked (GlcNAc...) asparagine). Residues 98–118 (GAVLLHILGALYMFYALAIVC) traverse the membrane as a helical segment. The Cytoplasmic portion of the chain corresponds to 119–142 (DDFFVPSLEKICEKLHLSEDVAGA). An Alpha-1 repeat occupies 139-179 (VAGATFMAAGSSTPELFASVIGVFITHGDVGVGTIVGSAVF). A helical transmembrane segment spans residues 143–163 (TFMAAGSSTPELFASVIGVFI). Residues 164–172 (THGDVGVGT) are Extracellular-facing. Residues 173-193 (IVGSAVFNILCIIGVCGLFAG) form a helical membrane-spanning segment. Residues 194-200 (QVVRLTW) are Cytoplasmic-facing. A helical transmembrane segment spans residues 201 to 221 (WAVCRDSVYYTLSVIVLIAFI). At 222–224 (YDE) the chain is on the extracellular side. Residues 225–245 (EIVWWEGLVLIILYVFYILIM) traverse the membrane as a helical segment. Topologically, residues 246-457 (KYNMKMQTFF…RWEKFFMVTF (212 aa)) are cytoplasmic. The interval 358–408 (ANGVNSKPLQNGRHENMENGNVPVENPEDPQQGQEQQPPPQPPPPEPESVE) is disordered. Pro residues predominate over residues 394–404 (QPPPQPPPPEP). Residues 458–478 (ITATLWIAVFSYLMVWLVTII) traverse the membrane as a helical segment. Residue glycine 479 is a topological domain, extracellular. The helical transmembrane segment at 480 to 500 (YTLGIPDVIMGITFLAAGTSV) threads the bilayer. One copy of the Alpha-2 repeat lies at 495–526 (AAGTSVPDCMASLIVARQGLGDMAVSNTIGSN). The Cytoplasmic portion of the chain corresponds to 501–526 (PDCMASLIVARQGLGDMAVSNTIGSN). A helical membrane pass occupies residues 527 to 547 (VFDILVGLGIPWGLQTMVINY). Over 548 to 557 (GSTVKINSRG) the chain is Extracellular. The chain crosses the membrane as a helical span at residues 558 to 578 (LVYSVVLLLGSVALTVLGIHL). Over 579–586 (NKWRLDRK) the chain is Cytoplasmic. Residues 587–607 (LGIYVLVLYAVFLCFSIMIEF) form a helical membrane-spanning segment. Topologically, residues 608 to 622 (NVFTFVNLPMCREDD) are extracellular.

The protein belongs to the Ca(2+):cation antiporter (CaCA) (TC 2.A.19) family. SLC24A subfamily. Expressed in late secretory-stage and maturation-stage ameloblasts, with significantly increased expression during the late stages of amelogenesis (at protein level). Widely expressed in most regions of the brain, including hippocampus, neocortex, thalamus, striatum and olfactory bulb. Expressed in the olfactory sensory neurons.

The protein localises to the cell membrane. The protein resides in the cytoplasm. It catalyses the reaction Ca(2+)(out) + K(+)(out) + 4 Na(+)(in) = Ca(2+)(in) + K(+)(in) + 4 Na(+)(out). Calcium, potassium:sodium antiporter that transports 1 Ca(2+) and 1 K(+) in exchange for 4 Na(+). Controls the rapid response termination and proper regulation of adaptation in olfactory sensory neurons (OSNs) which subsequently influences how odor information is encoded and perceived. May play a role in calcium transport during amelogenesis. The sequence is that of Sodium/potassium/calcium exchanger 4 from Mus musculus (Mouse).